The chain runs to 104 residues: Circadian clock oscillator protein KaiB (104 aa).

The protein belongs to the KaiB family. As to quaternary structure, the KaiABC complex composition changes during the circadian cycle to control KaiC phosphorylation. Complexes KaiC(6), KaiA(2-4):KaiC(6), KaiB(6):KaiC(6) and KaiC(6):KaiB(6):KaiA(12) are among the most important forms, many form cooperatively. Undergoes a major conformational rearrangment; in the free state forms homotetramers as a dimer of dimers. When bound to the CI domain of KaiC switches to a monomeric thioredoxin-fold (KaiB(fs)). KaiB(fs) binds CikA, leading it to dephosphorylate phospho-RpaA.

Functionally, key component of the KaiABC oscillator complex, which constitutes the main circadian regulator in cyanobacteria. Complex composition changes during the circadian cycle to control KaiC phosphorylation. KaiA stimulates KaiC autophosphorylation, while KaiB sequesters KaiA, leading to KaiC autodephosphorylation. Phospho-Ser-431 KaiC accumulation triggers binding of KaiB to form the KaiB(6):KaiC(6) complex, leading to changes in output regulators CikA and SasA. KaiB switches to a thioredoxin-like fold (KaiB(fs)) when bound to KaiC. KaiB(6):KaiC(6) formation exposes a site for KaiA binding that sequesters KaiA from KaiC, making the KaiC(6):KaiB(6):KaiA(12) complex that results in KaiC autodephosphorylation. In terms of biological role, a metamorphic protein which reversibly switches between an inactive tetrameric fold and a rare, thioredoxin-like monomeric fold (KaiB(fs)). KaiB(fs) binds phospho-KaiC, KaiA and CikA. KaiA and CikA compete for binding to KaiB(fs), and KaiB(fs) and SasA compete for binding to KaiC, thus the clock oscillator and output signal pathway are tightly coupled. This is Circadian clock oscillator protein KaiB from Acaryochloris marina (strain MBIC 11017).